The chain runs to 402 residues: UDP-N-acetylmuramoylalanine--D-glutamate ligase (402 aa).

Residue 97–103 (GTNGKTT) participates in ATP binding.

It belongs to the MurCDEF family.

Its subcellular location is the cytoplasm. The enzyme catalyses UDP-N-acetyl-alpha-D-muramoyl-L-alanine + D-glutamate + ATP = UDP-N-acetyl-alpha-D-muramoyl-L-alanyl-D-glutamate + ADP + phosphate + H(+). Its pathway is cell wall biogenesis; peptidoglycan biosynthesis. Functionally, cell wall formation. Catalyzes the addition of glutamate to the nucleotide precursor UDP-N-acetylmuramoyl-L-alanine (UMA). This is UDP-N-acetylmuramoylalanine--D-glutamate ligase from Campylobacter jejuni subsp. jejuni serotype O:6 (strain 81116 / NCTC 11828).